A 313-amino-acid polypeptide reads, in one-letter code: Peroxidase 57 (313 aa).

Residues 1–22 form the signal peptide; sequence MMKGAKFSSLLVLFFIFPIAFA. Cystine bridges form between Cys-33/Cys-109, Cys-66/Cys-71, Cys-115/Cys-309, and Cys-192/Cys-224. Catalysis depends on His-64, which acts as the Proton acceptor. Ca(2+)-binding residues include Asp-65, Val-68, Gly-70, Asp-72, and Ser-74. A substrate-binding site is contributed by Pro-155. Heme b is bound at residue His-185. Thr-186 serves as a coordination point for Ca(2+). Asp-233, Ser-236, and Asp-241 together coordinate Ca(2+).

The protein belongs to the peroxidase family. Classical plant (class III) peroxidase subfamily. Requires heme b as cofactor. The cofactor is Ca(2+). In terms of tissue distribution, mainly expressed in roots.

Its subcellular location is the secreted. The enzyme catalyses 2 a phenolic donor + H2O2 = 2 a phenolic radical donor + 2 H2O. Functionally, removal of H(2)O(2), oxidation of toxic reductants, biosynthesis and degradation of lignin, suberization, auxin catabolism, response to environmental stresses such as wounding, pathogen attack and oxidative stress. These functions might be dependent on each isozyme/isoform in each plant tissue. The protein is Peroxidase 57 (PER57) of Arabidopsis thaliana (Mouse-ear cress).